Consider the following 85-residue polypeptide: Alpha-insect toxin BjaIT (85 aa).

The N-terminal stretch at 1-19 is a signal peptide; sequence MNYLVVICFALLLMTGVES. One can recognise an LCN-type CS-alpha/beta domain in the interval 21-83; the sequence is RDAYIADNLN…VPIRIPGACR (63 aa). Cystine bridges form between cysteine 31–cysteine 82, cysteine 35–cysteine 55, cysteine 41–cysteine 65, and cysteine 45–cysteine 67. Position 83 is an arginine amide (arginine 83).

This sequence belongs to the long (4 C-C) scorpion toxin superfamily. Sodium channel inhibitor family. Alpha subfamily. In terms of tissue distribution, expressed by the venom gland.

It is found in the secreted. Functionally, alpha toxins bind voltage-independently at site-3 of sodium channels (Nav) and inhibit the inactivation of the activated channels, thereby blocking neuronal transmission. This toxin is active against insects (para/tipE). This chain is Alpha-insect toxin BjaIT, found in Hottentotta judaicus (Black scorpion).